A 177-amino-acid chain; its full sequence is Ubiquinol-cytochrome c reductase iron-sulfur subunit (177 aa).

A helical membrane pass occupies residues 18 to 38 (IVLTASSVAAVGAACAFWPII). Residues 88 to 175 (ARAVKMSELI…YIFISDTKIR (88 aa)) enclose the Rieske domain. [2Fe-2S] cluster is bound by residues Cys-120, His-122, Cys-139, and His-142. Cys-125 and Cys-141 are disulfide-bonded.

Belongs to the Rieske iron-sulfur protein family. In terms of assembly, the main subunits of complex b-c1 are: cytochrome b, cytochrome c1 and the Rieske protein. The cofactor is [2Fe-2S] cluster.

It localises to the cell membrane. The enzyme catalyses a quinol + 2 Fe(III)-[cytochrome c](out) = a quinone + 2 Fe(II)-[cytochrome c](out) + 2 H(+)(out). Component of the ubiquinol-cytochrome c reductase complex (complex III or cytochrome b-c1 complex), which is a respiratory chain that generates an electrochemical potential coupled to ATP synthesis. The sequence is that of Ubiquinol-cytochrome c reductase iron-sulfur subunit (petA) from Rickettsia typhi (strain ATCC VR-144 / Wilmington).